The primary structure comprises 128 residues: Nucleoside diphosphate kinase B (128 aa).

Residue Met1 is modified to N-acetylmethionine. Positions 9, 39, 70, 81, and 91 each coordinate ATP. Residue His94 is the Pros-phosphohistidine intermediate of the active site.

It belongs to the NDK family. It depends on Mg(2+) as a cofactor.

The protein resides in the cytoplasm. It is found in the nucleus. Its subcellular location is the cell projection. The protein localises to the lamellipodium. It localises to the ruffle. It carries out the reaction a 2'-deoxyribonucleoside 5'-diphosphate + ATP = a 2'-deoxyribonucleoside 5'-triphosphate + ADP. It catalyses the reaction a ribonucleoside 5'-diphosphate + ATP = a ribonucleoside 5'-triphosphate + ADP. Functionally, major role in the synthesis of nucleoside triphosphates other than ATP. The polypeptide is Nucleoside diphosphate kinase B (nme2) (Merluccius bilinearis (Silver hake)).